A 216-amino-acid chain; its full sequence is Calcium-binding protein 2 (216 aa).

The disordered stretch occupies residues 1–41 (MGNCAKTPWHRGSKERWQWPGSPLGGSRPSPGPRTEEQEGT). The N-myristoyl glycine moiety is linked to residue glycine 2. The span at 20–29 (PGSPLGGSRP) shows a compositional bias: low complexity. 4 EF-hand domains span residues 74–109 (EEIE…LGYM), 125–142 (GKVD…KLLA), 148–183 (IGVR…LLGE), and 185–216 (LSQR…MMSR). The Ca(2+) site is built by aspartate 87, aspartate 89, aspartate 91, tyrosine 93, and glutamate 98. Ca(2+) contacts are provided by aspartate 161, asparagine 163, aspartate 165, cysteine 167, glutamate 172, aspartate 198, asparagine 200, aspartate 202, and glutamate 209.

As to expression, expressed in the inner hair cells (IHCs), outer hair cells,(OHCs) and vestibular hair cells within the ear and in the retina (at protein level). Expressed in the retinal cone type 6 ON-bipolar cells and type 1 OFF-bipolar cells (at protein level). Expressed in the organ of Corti and spiral ganglion neurons in the cochlea (at protein level).

The protein resides in the cytoplasm. Its subcellular location is the perinuclear region. It is found in the cell membrane. The protein localises to the golgi apparatus. Required for sound encoding at inner hair cells (IHCs) synapses, likely via inhibition of the inactivation of voltage-gated calcium channel of type 1.3 (Cav1.3) in the IHCs. Required for the normal transfer of light signals through the retina. In Mus musculus (Mouse), this protein is Calcium-binding protein 2 (Cabp2).